The primary structure comprises 679 residues: HEAT repeat-containing protein 3 (679 aa).

Positions methionine 1–arginine 11 are enriched in basic residues. The segment at methionine 1–alanine 40 is disordered. A Phosphoserine modification is found at serine 15. HEAT repeat units follow at residues glycine 38–arginine 69 and aspartate 74–glycine 110. At serine 144 the chain carries Phosphoserine. Threonine 339 is modified (phosphothreonine).

Belongs to the nuclear import and ribosome assembly adapter family. Component of a hexameric 5S RNP precursor complex, composed of 5S RNA, RRS1, RPF2/BXDC1, RPL5, RPL11 and HEATR3; this complex acts as a precursor for ribosome assembly.

Its function is as follows. Plays a role in ribosome biogenesis and in nuclear import of the 60S ribosomal protein L5/large ribosomal subunit protein uL18 (RPL5). Required for proper erythrocyte maturation. This is HEAT repeat-containing protein 3 (Heatr3) from Mus musculus (Mouse).